Reading from the N-terminus, the 37-residue chain is Large ribosomal subunit protein bL36 (37 aa).

The protein belongs to the bacterial ribosomal protein bL36 family.

The polypeptide is Large ribosomal subunit protein bL36 (Sulfurihydrogenibium sp. (strain YO3AOP1)).